A 315-amino-acid chain; its full sequence is Mannose-6-phosphate isomerase ManA (315 aa).

3 residues coordinate Zn(2+): His-97, Glu-115, and His-172. Arg-192 is a catalytic residue.

The protein belongs to the mannose-6-phosphate isomerase type 1 family. Zn(2+) is required as a cofactor.

It carries out the reaction D-mannose 6-phosphate = D-fructose 6-phosphate. The chain is Mannose-6-phosphate isomerase ManA (manA) from Bacillus subtilis (strain 168).